A 504-amino-acid chain; its full sequence is ATP synthase subunit beta (504 aa).

Residues 1 to 23 (MAKAATPKETAAAKKPAAPKKAA) are disordered. 182-189 (GGAGVGKT) provides a ligand contact to ATP.

This sequence belongs to the ATPase alpha/beta chains family. As to quaternary structure, F-type ATPases have 2 components, CF(1) - the catalytic core - and CF(0) - the membrane proton channel. CF(1) has five subunits: alpha(3), beta(3), gamma(1), delta(1), epsilon(1). CF(0) has three main subunits: a(1), b(2) and c(9-12). The alpha and beta chains form an alternating ring which encloses part of the gamma chain. CF(1) is attached to CF(0) by a central stalk formed by the gamma and epsilon chains, while a peripheral stalk is formed by the delta and b chains.

It is found in the cell inner membrane. It catalyses the reaction ATP + H2O + 4 H(+)(in) = ADP + phosphate + 5 H(+)(out). Functionally, produces ATP from ADP in the presence of a proton gradient across the membrane. The catalytic sites are hosted primarily by the beta subunits. This is ATP synthase subunit beta from Rhizobium meliloti (strain 1021) (Ensifer meliloti).